The sequence spans 446 residues: MLHPETSPGRGHLLAVLLALLGTAWAEVWPPQLQEQAPMAGALNRKESFLLLSLHNRLRSWVQPPAADMRRLDWSDSLAQLAQARAALCGIPTPSLASGLWRTLQVGWNMQLLPAGLASFVEVVSLWFAEGQRYSHAAGECARNATCTHYTQLVWATSSQLGCGRHLCSAGQAAIEAFVCAYSPRGNWEVNGKTIVPYKKGAWCSLCTASVSGCFKAWDHAGGLCEVPRNPCRMSCQNHGRLNISTCHCHCPPGYTGRYCQVRCSLQCVHGRFREEECSCVCDIGYGGAQCATKVHFPFHTCDLRIDGDCFMVSSEADTYYRARMKCQRKGGVLAQIKSQKVQDILAFYLGRLETTNEVIDSDFETRNFWIGLTYKTAKDSFRWATGEHQAFTSFAFGQPDNHGFGNCVELQASAAFNWNNQRCKTRNRYICQFAQEHISRWGPGS.

Positions 1 to 26 (MLHPETSPGRGHLLAVLLALLGTAWA) are cleaved as a signal peptide. The 131-residue stretch at 52–182 (LSLHNRLRSW…AAIEAFVCAY (131 aa)) folds into the SCP domain. Asparagine 144 is a glycosylation site (N-linked (GlcNAc...) asparagine). Residues 228–261 (PRNPCRMSCQNHGRLNISTCHCHCPPGYTGRYCQ) form the EGF-like domain. 4 disulfides stabilise this stretch: cysteine 236/cysteine 249, cysteine 251/cysteine 260, cysteine 327/cysteine 432, and cysteine 408/cysteine 424. Residues 306 to 433 (IDGDCFMVSS…CKTRNRYICQ (128 aa)) form the C-type lectin domain.

In terms of tissue distribution, detected in peripheral blood cells.

The protein resides in the secreted. It is found in the endoplasmic reticulum. The protein localises to the golgi apparatus. It localises to the endosome. Its function is as follows. Binds polysaccharidesin a Ca(2+)-independent manner with a preferentially binding to fucoidan, beta-glucans and galactans. The chain is C-type lectin domain family 18 member C (CLEC18C) from Homo sapiens (Human).